The chain runs to 542 residues: MFS thioclapurine efflux transporter tcpA (542 aa).

Over residues M1–N10 the composition is skewed to basic and acidic residues. The disordered stretch occupies residues M1–T24. A compositionally biased stretch (polar residues) spans G13–T24. N22 carries an N-linked (GlcNAc...) asparagine glycan. 3 helical membrane-spanning segments follow: residues S32–L52, G75–T97, and M103–P123. N124 carries N-linked (GlcNAc...) asparagine glycosylation. Helical transmembrane passes span A133–A153, A161–G181, C193–F213, I234–G254, I265–L285, and I307–F327. An N-linked (GlcNAc...) asparagine glycan is attached at N332. The helical transmembrane segment at G339–I359 threads the bilayer. N-linked (GlcNAc...) asparagine glycosylation occurs at N361. The next 4 membrane-spanning stretches (helical) occupy residues M370 to G390, W396 to V416, V427 to A447, and V500 to L520.

Belongs to the major facilitator superfamily.

The protein resides in the cell membrane. In terms of biological role, MFS efflux transporter probably involved in thioclapurine export. This Claviceps purpurea (strain 20.1) (Ergot fungus) protein is MFS thioclapurine efflux transporter tcpA.